A 442-amino-acid polypeptide reads, in one-letter code: Putative protein YjbI (442 aa).

This is Putative protein YjbI (yjbI) from Escherichia coli (strain K12).